Reading from the N-terminus, the 287-residue chain is Regulator of V-ATPase in vacuolar membrane protein 2 (287 aa).

Component of the RAVE complex composed of rav1, rav2 and skp1.

It is found in the cytoplasm. The protein resides in the nucleus. Its function is as follows. Component of the RAVE complex which is required for stable assembly of the vacuolar ATPase complex V-ATPase. This Schizosaccharomyces pombe (strain 972 / ATCC 24843) (Fission yeast) protein is Regulator of V-ATPase in vacuolar membrane protein 2 (rav2).